The sequence spans 89 residues: Small ribosomal subunit protein uS15 (89 aa).

This sequence belongs to the universal ribosomal protein uS15 family. Part of the 30S ribosomal subunit. Forms a bridge to the 50S subunit in the 70S ribosome, contacting the 23S rRNA.

One of the primary rRNA binding proteins, it binds directly to 16S rRNA where it helps nucleate assembly of the platform of the 30S subunit by binding and bridging several RNA helices of the 16S rRNA. Its function is as follows. Forms an intersubunit bridge (bridge B4) with the 23S rRNA of the 50S subunit in the ribosome. This is Small ribosomal subunit protein uS15 from Chlamydia caviae (strain ATCC VR-813 / DSM 19441 / 03DC25 / GPIC) (Chlamydophila caviae).